Consider the following 393-residue polypeptide: MSANYWASTQCNNWLLDRPQLELARKEDLRYATRLECAALGVFFSNLLSLICKRLNLRQRVTASANVFFRRFFAKNSYSALDPFLVCATCVYVAAKVEESPIHIKSAVAEATRSFTEHGFRGMPTDHSSLAEMEFYLLEEMEFDMVLFHSYRSLIVMFEDYGSGSAVGSGNSIHERSAGAAGSGSGSGGSGMMIGLGIEAAAFGVTKGLASVEEGDAASAIAEEDKVQLNEFNDEVLLMCWFILNDTYKTDIPLMYPPYMVALASIWLGLSLHPPSFDKITASLHTMQTRRDEHHLSIQRILDNPASTPAELASAKREPSPPSQDALTFFASLNVSLPLLAEIVQEMVSAYSVQHQVQRLVSDGPGIVKLLERMRESRRVALIKDRDQTRTHA.

The region spanning 51 to 146 (ICKRLNLRQR…LLEEMEFDMV (96 aa)) is the Cyclin N-terminal domain.

The protein belongs to the cyclin family. Cyclin C subfamily. As to quaternary structure, component of the SRB8-11 complex, a regulatory module of the Mediator complex.

It localises to the nucleus. In terms of biological role, component of the SRB8-11 complex. The SRB8-11 complex is a regulatory module of the Mediator complex which is itself involved in regulation of basal and activated RNA polymerase II-dependent transcription. The SRB8-11 complex may be involved in the transcriptional repression of a subset of genes regulated by Mediator. It may inhibit the association of the Mediator complex with RNA polymerase II to form the holoenzyme complex. The SRB8-11 complex phosphorylates the C-terminal domain (CTD) of the largest subunit of RNA polymerase II. The polypeptide is RNA polymerase II holoenzyme cyclin-like subunit (SSN8) (Mycosarcoma maydis (Corn smut fungus)).